Here is a 493-residue protein sequence, read N- to C-terminus: Guanosine-5'-triphosphate,3'-diphosphate pyrophosphatase (493 aa).

The protein belongs to the GppA/Ppx family. GppA subfamily.

It catalyses the reaction guanosine 3'-diphosphate 5'-triphosphate + H2O = guanosine 3',5'-bis(diphosphate) + phosphate + H(+). It functions in the pathway purine metabolism; ppGpp biosynthesis; ppGpp from GTP: step 2/2. In terms of biological role, catalyzes the conversion of pppGpp to ppGpp. Guanosine pentaphosphate (pppGpp) is a cytoplasmic signaling molecule which together with ppGpp controls the 'stringent response', an adaptive process that allows bacteria to respond to amino acid starvation, resulting in the coordinated regulation of numerous cellular activities. The sequence is that of Guanosine-5'-triphosphate,3'-diphosphate pyrophosphatase from Salmonella paratyphi B (strain ATCC BAA-1250 / SPB7).